A 233-amino-acid chain; its full sequence is Pirin-like protein YhaK (233 aa).

It belongs to the pirin family. As to quaternary structure, monomer.

The protein resides in the cytoplasm. In terms of biological role, does not have quercetin 2,3-dioxygenase activity. In Escherichia coli O157:H7, this protein is Pirin-like protein YhaK (yhaK).